The following is a 233-amino-acid chain: MDTGVTSPRVLVVDDDSDVLASLERGLRLSGFEVATAVDGAEALRSATENRPDAIVLDINMPVLDGVSVVTALRAMDNDVPVCVLSARSSVDDRVAGLEAGADDYLVKPFVLAELVARVKALLRRRGSTATSSSETITVGPLEVDIPGRRARVNGVDVDLTKREFDLLAVLAEHKTAVLSRAQLLELVWGYDFAADTNVVDVFIGYLRRKLEAGGGPRLLHTVRGVGFVLRMQ.

The region spanning 9 to 123 (RVLVVDDDSD…ELVARVKALL (115 aa)) is the Response regulatory domain. 4-aspartylphosphate is present on Asp-58. The ompR/PhoB-type DNA-binding region spans 134–232 (SETITVGPLE…VRGVGFVLRM (99 aa)).

In terms of processing, phosphorylated by PrrB at Asp-58.

The protein resides in the cytoplasm. In terms of biological role, member of the two-component regulatory system PrrB/PrrA that is involved specifically in early intracellular multiplication of Mycobacterium and is essential for its viability. Upon phosphorylation by PrrB, functions as a transcription regulator by direct binding to promoter regions of target genes to positively regulate their expression. Autoregulates its own expression. This is Transcriptional regulatory protein PrrA (prrA) from Mycobacterium bovis (strain ATCC BAA-935 / AF2122/97).